A 503-amino-acid polypeptide reads, in one-letter code: Maturase K (503 aa).

The protein belongs to the intron maturase 2 family. MatK subfamily.

It is found in the plastid. The protein resides in the chloroplast. Its function is as follows. Usually encoded in the trnK tRNA gene intron. Probably assists in splicing its own and other chloroplast group II introns. The protein is Maturase K of Liquidambar styraciflua (Sweetgum tree).